A 92-amino-acid polypeptide reads, in one-letter code: Small ribosomal subunit protein uS19 (92 aa).

In terms of biological role, protein S19 forms a complex with S13 that binds strongly to the 16S ribosomal RNA. The sequence is that of Small ribosomal subunit protein uS19 from Rhodopseudomonas palustris (strain ATCC BAA-98 / CGA009).